The sequence spans 415 residues: DNA primase DnaG (415 aa).

A Toprim domain is found at 171–250 (DAIIIVEGRA…AFSPRGKSVE (80 aa)). 3 residues coordinate Mg(2+): Glu-177, Asp-219, and Asp-221. Residues 280-323 (ELPGDLGGRPARTAPAHDEGGNSDTTGKQAVSQKRIRDGTSKVP) are disordered. The span at 301-311 (NSDTTGKQAVS) shows a compositional bias: polar residues.

It belongs to the archaeal DnaG primase family. As to quaternary structure, forms a ternary complex with MCM helicase and DNA. Mg(2+) serves as cofactor.

The catalysed reaction is ssDNA + n NTP = ssDNA/pppN(pN)n-1 hybrid + (n-1) diphosphate.. Its function is as follows. RNA polymerase that catalyzes the synthesis of short RNA molecules used as primers for DNA polymerase during DNA replication. The chain is DNA primase DnaG from Methanoregula boonei (strain DSM 21154 / JCM 14090 / 6A8).